Here is a 432-residue protein sequence, read N- to C-terminus: Putative D-alanyl-D-alanine carboxypeptidase (432 aa).

A helical; Signal-anchor transmembrane segment spans residues 7–25 (ATVLLTFSLSAFAVEYPVL).

It belongs to the peptidase S12 family. YfeW subfamily.

The protein localises to the cell inner membrane. The enzyme catalyses Preferential cleavage: (Ac)2-L-Lys-D-Ala-|-D-Ala. Also transpeptidation of peptidyl-alanyl moieties that are N-acyl substituents of D-alanine.. This chain is Putative D-alanyl-D-alanine carboxypeptidase, found in Salmonella gallinarum (strain 287/91 / NCTC 13346).